Consider the following 85-residue polypeptide: Small ribosomal subunit protein uS17 (85 aa).

It belongs to the universal ribosomal protein uS17 family. Part of the 30S ribosomal subunit.

Its function is as follows. One of the primary rRNA binding proteins, it binds specifically to the 5'-end of 16S ribosomal RNA. This is Small ribosomal subunit protein uS17 from Natranaerobius thermophilus (strain ATCC BAA-1301 / DSM 18059 / JW/NM-WN-LF).